Here is a 778-residue protein sequence, read N- to C-terminus: MHKKSLPLMALRDMVVFPGVIAPIFVGRPKSLQALSHTTISEEDNSKYILVTLQKKFDQENPSTHELYNTAILAKIIQIVKLPNNTAKILIEAVARVKLSNIKGEEAFEANYEIIPDEEIFDVNNMRSLVDNAVQLFSKYAINDKKVNAEIIETINKEISNSTNFIDIINILASHLITSLEAKQHLLEETSPFKRITTVISMLNSNIVNSETEQALQKRVRKQIEKTQRDYYLHEQMKAIQKELDEDKSELADIENKIKSLKLSKEAKEKAEAELKKLRTMNQMSAESGVTRNYLETLLSLPWGKYDNSKIDINQAEKILNRDHFGLEKVKERIIEYLAVLQRSSKIRGPILCLIGPPGVGKTSLVKSIAEGMGRKYTKLALGGVRDEAEIRGHRKTYLGSMPGKILGQLKKVKTSNPVMLLDEIDKMSSDFRGDPASALLEVLDPEQNSHFVDHYLEVEYDLSNVIFIATANSHDLPRALSDRMEKIYISGYVEETKLQIARNYLVPKQFKMHKIKKDEITISETAILDLIRYYTKESGVRALEREIGALTRKALKQILADKSVKHIAIDSNHLEEFLGAKKYNFGLAEKEDQIGSTTGLAYTEVGGELLTIEALAFPGKGEIKTTGKLGDVMKESAMAAYSCFRSRATNFGLKYDNYKDFDIHIHVPAGAIPKDGPSAGCALFTTIVSLMTKIPVHRTVAMTGEITLRGNVLPIGGLKEKLLAASRGGIKTVLIPEENVKDLKDIPPNIKESLEIISVSNIDQVLKHALVGTPINK.

In terms of domain architecture, Lon N-terminal spans 6–207 (LPLMALRDMV…TVISMLNSNI (202 aa)). 356–363 (GPPGVGKT) is an ATP binding site. The 182-residue stretch at 592-773 (EDQIGSTTGL…DQVLKHALVG (182 aa)) folds into the Lon proteolytic domain. Residues serine 679 and lysine 722 contribute to the active site.

This sequence belongs to the peptidase S16 family. Homohexamer. Organized in a ring with a central cavity.

Its subcellular location is the cytoplasm. The enzyme catalyses Hydrolysis of proteins in presence of ATP.. Its function is as follows. ATP-dependent serine protease that mediates the selective degradation of mutant and abnormal proteins as well as certain short-lived regulatory proteins. Required for cellular homeostasis and for survival from DNA damage and developmental changes induced by stress. Degrades polypeptides processively to yield small peptide fragments that are 5 to 10 amino acids long. Binds to DNA in a double-stranded, site-specific manner. This chain is Lon protease, found in Rickettsia conorii (strain ATCC VR-613 / Malish 7).